A 282-amino-acid polypeptide reads, in one-letter code: Shikimate dehydrogenase (NADP(+)) (282 aa).

Shikimate-binding positions include 16–18 (SLS) and Thr63. Residue Lys67 is the Proton acceptor of the active site. The shikimate site is built by Asn88 and Asp103. NADP(+)-binding positions include 128 to 132 (GAGGA) and Leu219. Tyr221 provides a ligand contact to shikimate. Residue Gly243 participates in NADP(+) binding.

Belongs to the shikimate dehydrogenase family. Homodimer.

It catalyses the reaction shikimate + NADP(+) = 3-dehydroshikimate + NADPH + H(+). The protein operates within metabolic intermediate biosynthesis; chorismate biosynthesis; chorismate from D-erythrose 4-phosphate and phosphoenolpyruvate: step 4/7. Its function is as follows. Involved in the biosynthesis of the chorismate, which leads to the biosynthesis of aromatic amino acids. Catalyzes the reversible NADPH linked reduction of 3-dehydroshikimate (DHSA) to yield shikimate (SA). In Xylella fastidiosa (strain M12), this protein is Shikimate dehydrogenase (NADP(+)).